The following is a 115-amino-acid chain: Large ribosomal subunit protein bL20 (115 aa).

This sequence belongs to the bacterial ribosomal protein bL20 family.

Functionally, binds directly to 23S ribosomal RNA and is necessary for the in vitro assembly process of the 50S ribosomal subunit. It is not involved in the protein synthesizing functions of that subunit. The chain is Large ribosomal subunit protein bL20 from Parasynechococcus marenigrum (strain WH8102).